The following is a 225-amino-acid chain: Thymidylate kinase (225 aa).

An ATP-binding site is contributed by 10–17 (GVEGGGKT).

It belongs to the thymidylate kinase family.

The enzyme catalyses dTMP + ATP = dTDP + ADP. Phosphorylation of dTMP to form dTDP in both de novo and salvage pathways of dTTP synthesis. This chain is Thymidylate kinase, found in Trichodesmium erythraeum (strain IMS101).